A 497-amino-acid polypeptide reads, in one-letter code: Dol-P-Man:Man(7)GlcNAc(2)-PP-Dol alpha-1,6-mannosyltransferase (497 aa).

A run of 7 helical transmembrane segments spans residues 10–30 (FLQSYGYDLILGSVAAIYVVM), 71–91 (FIGAFIVSVFASPVVSIISCL), 92–112 (GFPKVYSLVAARLVLGCIILS), 125–145 (FGNQVETFFVLFTSLQFHFLF), 154–174 (ILALGLVNLAYGNWLKGNFYP), 178–198 (FLIFATVIFRCDTMLLLGPIG), and 215–235 (YCVGTALLAVGLTIFVDSIMW). N253 carries N-linked (GlcNAc...) asparagine glycosylation. 4 helical membrane-spanning segments follow: residues 263–285 (IHWYFTSALPRSLLVAYPLSLLG), 292–312 (VPFFIVPVLSFVILYSKLPHK), 316–336 (FIISSVPMFNLSAAVAASRIY), and 346–366 (LVNMVMLAFFAISAGCTVVTF). An N-linked (GlcNAc...) asparagine glycan is attached at N435.

Belongs to the glycosyltransferase 22 family.

It localises to the endoplasmic reticulum membrane. The enzyme catalyses an alpha-D-Man-(1-&gt;2)-alpha-D-Man-(1-&gt;2)-alpha-D-Man-(1-&gt;3)-[alpha-D-Man-(1-&gt;2)-alpha-D-Man-(1-&gt;3)-alpha-D-Man-(1-&gt;6)]-beta-D-Man-(1-&gt;4)-beta-D-GlcNAc-(1-&gt;4)-alpha-D-GlcNAc-diphospho-di-trans,poly-cis-dolichol + a di-trans,poly-cis-dolichyl beta-D-mannosyl phosphate = an alpha-D-Man-(1-&gt;2)-alpha-D-Man-(1-&gt;2)-alpha-D-Man-(1-&gt;3)-[alpha-D-Man-(1-&gt;2)-alpha-D-Man-(1-&gt;3)-[alpha-D-Man-(1-&gt;6)]-alpha-D-Man-(1-&gt;6)]-beta-D-Man-(1-&gt;4)-beta-D-GlcNAc-(1-&gt;4)-alpha-D-GlcNAc-diphospho-di-trans,poly-cis-dolichol + a di-trans,poly-cis-dolichyl phosphate + H(+). It functions in the pathway protein modification; protein glycosylation. Mannosyltransferase that operates in the biosynthetic pathway of dolichol-linked oligosaccharides, the glycan precursors employed in protein asparagine (N)-glycosylation. The assembly of dolichol-linked oligosaccharides begins on the cytosolic side of the endoplasmic reticulum membrane and finishes in its lumen. The sequential addition of sugars to dolichol pyrophosphate produces dolichol-linked oligosaccharides containing fourteen sugars, including two GlcNAcs, nine mannoses and three glucoses. Once assembled, the oligosaccharide is transferred from the lipid to nascent proteins by oligosaccharyltransferases. In the lumen of the endoplasmic reticulum, adds the eighth mannose residue in an alpha-1,6 linkage onto Man(7)GlcNAc(2)-PP-dolichol to produce Man(8)GlcNAc(2)-PP-dolichol. In Arabidopsis thaliana (Mouse-ear cress), this protein is Dol-P-Man:Man(7)GlcNAc(2)-PP-Dol alpha-1,6-mannosyltransferase (ALG12).